The primary structure comprises 286 residues: Flagellin FlaB1 (286 aa).

The required for interaction with FliW stretch occupies residues 231-286 (LDIAAENLQAAESRIRDANIAKQMVEYTKNQVLTQSGTAMLAQANTSAQSILSILR).

This sequence belongs to the bacterial flagellin family. In terms of assembly, the flagellum consists of an outer layer composed of repeating units of FlaA around a core that contains several antigenically related polypeptides. Interacts via its C-terminus with FliW; a synthetic peptide of residues 229-247 partially blocks binding to FliW.

The protein localises to the periplasmic flagellum. It localises to the periplasm. Component of the core of the flagella. This is Flagellin FlaB1 (flaB1) from Treponema pallidum (strain Nichols).